Consider the following 137-residue polypeptide: Nucleoside diphosphate kinase (137 aa).

ATP-binding residues include lysine 9, phenylalanine 57, arginine 85, threonine 91, and arginine 102. The Pros-phosphohistidine intermediate role is filled by histidine 119.

It belongs to the NDK family. As to quaternary structure, homotetramer. Mg(2+) is required as a cofactor.

The protein localises to the cytoplasm. It carries out the reaction a 2'-deoxyribonucleoside 5'-diphosphate + ATP = a 2'-deoxyribonucleoside 5'-triphosphate + ADP. The catalysed reaction is a ribonucleoside 5'-diphosphate + ATP = a ribonucleoside 5'-triphosphate + ADP. In terms of biological role, major role in the synthesis of nucleoside triphosphates other than ATP. The ATP gamma phosphate is transferred to the NDP beta phosphate via a ping-pong mechanism, using a phosphorylated active-site intermediate. This Streptococcus thermophilus (strain CNRZ 1066) protein is Nucleoside diphosphate kinase.